Here is a 302-residue protein sequence, read N- to C-terminus: UPF0725 protein At1g23960 (302 aa).

Ala2 bears the N-acetylalanine mark.

It belongs to the UPF0725 (EMB2204) family.

The protein is UPF0725 protein At1g23960 of Arabidopsis thaliana (Mouse-ear cress).